The primary structure comprises 358 residues: B3 domain-containing transcription factor NGA3 (358 aa).

Positions 1-14 (MDLSLAPTTTTSSD) are enriched in polar residues. The disordered stretch occupies residues 1–45 (MDLSLAPTTTTSSDQEQDRDQELTSNIGASSSSGPSGNNNNLPMM). The span at 25-45 (SNIGASSSSGPSGNNNNLPMM) shows a compositional bias: low complexity. The TF-B3 DNA-binding region spans 56–162 (FDKVVTPSDV…KLYIDWRHRP (107 aa)). The interval 310-358 (EIGASSSSSSALRLNLSTDHDDDNDDGDDGDDDQFAKKGKSSLSLNFNP) is disordered. Over residues 329–342 (HDDDNDDGDDGDDD) the composition is skewed to acidic residues.

Its subcellular location is the nucleus. Regulates lateral organ growth. Functionally redundant with NGA1, NGA2 and NGA4. This Arabidopsis thaliana (Mouse-ear cress) protein is B3 domain-containing transcription factor NGA3 (NGA3).